Reading from the N-terminus, the 403-residue chain is Poly(rC)-binding protein 4 (403 aa).

3 consecutive KH domains span residues 17 to 67 (TLTL…TITG), 101 to 154 (PVTL…TVSG), and 241 to 293 (TSSQ…TITG).

As to expression, widely expressed, with highest levels in testis and lowest in heart.

The protein resides in the cytoplasm. In terms of biological role, single-stranded nucleic acid binding protein that binds preferentially to oligo dC. This chain is Poly(rC)-binding protein 4 (Pcbp4), found in Mus musculus (Mouse).